We begin with the raw amino-acid sequence, 307 residues long: ADP,ATP carrier protein 3 (307 aa).

Solcar repeat units lie at residues 10-103 (TNFA…IKLM), 114-206 (KWFA…LKPL), and 214-300 (GSFL…LQMI). Helical transmembrane passes span 12–39 (FAIN…VKIL), 80–104 (TANV…KLMF), 112–132 (YGKW…LSLL), 182–203 (FMPS…FDSL), and 217–237 (LASF…SYPL). ADP contacts are provided by Arg-85 and Lys-97. An ADP-binding site is contributed by Arg-241. The interval 241–246 (RRRMMM) is important for transport activity. Residues 241–246 (RRRMMM) carry the Nucleotide carrier signature motif motif. A helical membrane pass occupies residues 277–297 (CGANILRSVAGAGVISMYDQL).

It belongs to the mitochondrial carrier (TC 2.A.29) family. Monomer.

It localises to the mitochondrion inner membrane. It carries out the reaction ADP(in) + ATP(out) = ADP(out) + ATP(in). With respect to regulation, the matrix-open state (m-state) is inhibited by the membrane-permeable bongkrekic acid (BKA). The cytoplasmic-open state (c-state) is inhibited by the membrane-impermeable toxic inhibitor carboxyatractyloside (CATR). ADP:ATP antiporter that mediates import of ADP into the mitochondrial matrix for ATP synthesis, and export of ATP out to fuel the cell. Cycles between the cytoplasmic-open state (c-state) and the matrix-open state (m-state): operates by the alternating access mechanism with a single substrate-binding site intermittently exposed to either the cytosolic (c-state) or matrix (m-state) side of the inner mitochondrial membrane. The chain is ADP,ATP carrier protein 3 (AAC3) from Saccharomyces cerevisiae (strain ATCC 204508 / S288c) (Baker's yeast).